The sequence spans 475 residues: Glutamate--tRNA ligase (475 aa).

The 'HIGH' region signature appears at 9-19 (PSPTGYLHVGG). The short motif at 240–244 (KLSKR) is the 'KMSKS' region element. K243 is a binding site for ATP.

This sequence belongs to the class-I aminoacyl-tRNA synthetase family. Glutamate--tRNA ligase type 1 subfamily. As to quaternary structure, monomer.

Its subcellular location is the cytoplasm. The catalysed reaction is tRNA(Glu) + L-glutamate + ATP = L-glutamyl-tRNA(Glu) + AMP + diphosphate. Catalyzes the attachment of glutamate to tRNA(Glu) in a two-step reaction: glutamate is first activated by ATP to form Glu-AMP and then transferred to the acceptor end of tRNA(Glu). This Vibrio campbellii (strain ATCC BAA-1116) protein is Glutamate--tRNA ligase.